We begin with the raw amino-acid sequence, 240 residues long: UDP-2,3-diacylglucosamine hydrolase (240 aa).

Residues Asp9, His11, Asp43, Asn81, and His116 each coordinate Mn(2+). Residue 81 to 82 participates in substrate binding; that stretch reads NR. Asp124, Ser162, Lys166, Lys169, and His197 together coordinate substrate. Mn(2+)-binding residues include His197 and His199.

This sequence belongs to the LpxH family. Mn(2+) is required as a cofactor.

Its subcellular location is the cell inner membrane. It catalyses the reaction UDP-2-N,3-O-bis[(3R)-3-hydroxytetradecanoyl]-alpha-D-glucosamine + H2O = 2-N,3-O-bis[(3R)-3-hydroxytetradecanoyl]-alpha-D-glucosaminyl 1-phosphate + UMP + 2 H(+). It participates in glycolipid biosynthesis; lipid IV(A) biosynthesis; lipid IV(A) from (3R)-3-hydroxytetradecanoyl-[acyl-carrier-protein] and UDP-N-acetyl-alpha-D-glucosamine: step 4/6. Functionally, hydrolyzes the pyrophosphate bond of UDP-2,3-diacylglucosamine to yield 2,3-diacylglucosamine 1-phosphate (lipid X) and UMP by catalyzing the attack of water at the alpha-P atom. Involved in the biosynthesis of lipid A, a phosphorylated glycolipid that anchors the lipopolysaccharide to the outer membrane of the cell. The sequence is that of UDP-2,3-diacylglucosamine hydrolase from Neisseria meningitidis serogroup C (strain 053442).